Reading from the N-terminus, the 309-residue chain is Ribonuclease Z (309 aa).

The Zn(2+) site is built by His-63, His-65, Asp-67, His-68, His-145, Asp-216, and His-274. Catalysis depends on Asp-67, which acts as the Proton acceptor.

The protein belongs to the RNase Z family. As to quaternary structure, homodimer. The cofactor is Zn(2+).

It catalyses the reaction Endonucleolytic cleavage of RNA, removing extra 3' nucleotides from tRNA precursor, generating 3' termini of tRNAs. A 3'-hydroxy group is left at the tRNA terminus and a 5'-phosphoryl group is left at the trailer molecule.. Its function is as follows. Zinc phosphodiesterase, which displays some tRNA 3'-processing endonuclease activity. Probably involved in tRNA maturation, by removing a 3'-trailer from precursor tRNA. The polypeptide is Ribonuclease Z (Streptococcus mutans serotype c (strain ATCC 700610 / UA159)).